The chain runs to 285 residues: Acetyl-coenzyme A carboxylase carboxyl transferase subunit beta (285 aa).

The 257-residue stretch at 29 to 285 (IMTKCPKCKK…ILKIHQEVTK (257 aa)) folds into the CoA carboxyltransferase N-terminal domain. Positions 33, 36, 52, and 55 each coordinate Zn(2+). A C4-type zinc finger spans residues 33 to 55 (CPKCKKIMYTKELAENLNVCFNC).

It belongs to the AccD/PCCB family. Acetyl-CoA carboxylase is a heterohexamer composed of biotin carboxyl carrier protein (AccB), biotin carboxylase (AccC) and two subunits each of ACCase subunit alpha (AccA) and ACCase subunit beta (AccD). Zn(2+) is required as a cofactor.

The protein resides in the cytoplasm. It catalyses the reaction N(6)-carboxybiotinyl-L-lysyl-[protein] + acetyl-CoA = N(6)-biotinyl-L-lysyl-[protein] + malonyl-CoA. The protein operates within lipid metabolism; malonyl-CoA biosynthesis; malonyl-CoA from acetyl-CoA: step 1/1. Component of the acetyl coenzyme A carboxylase (ACC) complex. Biotin carboxylase (BC) catalyzes the carboxylation of biotin on its carrier protein (BCCP) and then the CO(2) group is transferred by the transcarboxylase to acetyl-CoA to form malonyl-CoA. In Staphylococcus aureus (strain Mu3 / ATCC 700698), this protein is Acetyl-coenzyme A carboxylase carboxyl transferase subunit beta.